The chain runs to 335 residues: Mesoderm-specific transcript homolog protein (335 aa).

The next 3 helical transmembrane spans lie at 13–33, 88–108, and 266–286; these read WWVQ…HIPP, IWEG…LGFG, and VGAL…LDPV. Residues 71-310 enclose the AB hydrolase-1 domain; it reads IVVLLHGFPT…PRSTVSILDD (240 aa). The RVIALD motif lies at 98–103; the sequence is RVIALD.

The protein belongs to the AB hydrolase superfamily. No detectable transcripts during preimplantation development. Isoform 1 was not detected in either in vitro-matured oocytes (IVF) or parthenogenetically activated (PA) blastocyst. Isoform 2 was expressed in IVF and PA blastocysts.

The protein resides in the endoplasmic reticulum membrane. The chain is Mesoderm-specific transcript homolog protein (MEST) from Bos taurus (Bovine).